The chain runs to 167 residues: MSDTPETGKPAAGTKPAARTEAKAPPKSARRRSRELALQGLYQWLLNRNDIGAIQAHLHDAQGFNKADSEHFDALLNGAVREEARLTAAFEPFLDRKVEELSPVERAALLVGSYELVHCVDIPYKVVINEAVELTKTFGGVEGYKYVNGVLDKLAAQVRSAEVAARR.

A disordered region spans residues 1-32 (MSDTPETGKPAAGTKPAARTEAKAPPKSARRR).

Belongs to the NusB family.

Functionally, involved in transcription antitermination. Required for transcription of ribosomal RNA (rRNA) genes. Binds specifically to the boxA antiterminator sequence of the ribosomal RNA (rrn) operons. This Cupriavidus pinatubonensis (strain JMP 134 / LMG 1197) (Cupriavidus necator (strain JMP 134)) protein is Transcription antitermination protein NusB.